A 567-amino-acid polypeptide reads, in one-letter code: Hydrogenase-2 large chain (567 aa).

Cysteine 61, cysteine 64, cysteine 546, and cysteine 549 together coordinate Ni(2+). Residues 553–567 (VVDADGNEVVSVKVL) constitute a propeptide that is removed on maturation.

It belongs to the [NiFe]/[NiFeSe] hydrogenase large subunit family. Heterodimer of a large and a small subunit. Requires Ni(2+) as cofactor.

The protein localises to the cell membrane. It carries out the reaction H2 + A = AH2. Functionally, this is one of three E.coli hydrogenases synthesized in response to different physiological conditions. HYD2 is involved in hydrogen uptake. This chain is Hydrogenase-2 large chain (hybC), found in Escherichia coli O157:H7.